Here is a 250-residue protein sequence, read N- to C-terminus: Vacuolar protein sorting-associated protein 22 homolog 1 (250 aa).

Positions 35–55 form a coiled coil; the sequence is MKEQLSTFRSQLEEFARKHKN.

It belongs to the SNF8 family. In terms of assembly, component of the endosomal sorting complex required for transport II (ESCRT-II), composed of VPS22, VPS25 and VPS36.

It localises to the endosome. Component of the endosomal sorting complex required for transport II (ESCRT-II), which is required for multivesicular body (MVB) formation and sorting of endosomal cargo proteins into MVBs. The ESCRT-II complex is probably involved in the recruitment of the ESCRT-III complex. This chain is Vacuolar protein sorting-associated protein 22 homolog 1 (VP22-1), found in Arabidopsis thaliana (Mouse-ear cress).